A 78-amino-acid polypeptide reads, in one-letter code: Large ribosomal subunit protein bL28 (78 aa).

Residues M1–H20 form a disordered region.

Belongs to the bacterial ribosomal protein bL28 family.

The sequence is that of Large ribosomal subunit protein bL28 from Actinobacillus succinogenes (strain ATCC 55618 / DSM 22257 / CCUG 43843 / 130Z).